We begin with the raw amino-acid sequence, 161 residues long: MGHHHHHHGGSGHHHHHHHHGSGHYGGGAVLVTPIVTPVPVVYGSRSSSYCPKSMTVAYVLWFFFGILGFHRLYLGRVGTFFLYFFTAGVFGLGWLFDAFYTHKMVKHYNECEFTKSCVGQSPPATIPIYQSEGAYPTYQQVPQQPPQFYQPQQQQPQYQP.

Residues 1 to 24 are Cytoplasmic-facing; that stretch reads MGHHHHHHGGSGHHHHHHHHGSGH. Residues 25-45 form a helical membrane-spanning segment; that stretch reads YGGGAVLVTPIVTPVPVVYGS. Over 46–54 the chain is Extracellular; that stretch reads RSSSYCPKS. The TM2 domain maps to 52–100; that stretch reads PKSMTVAYVLWFFFGILGFHRLYLGRVGTFFLYFFTAGVFGLGWLFDAF. The helical transmembrane segment at 55 to 75 threads the bilayer; it reads MTVAYVLWFFFGILGFHRLYL. The Cytoplasmic portion of the chain corresponds to 76 to 80; the sequence is GRVGT. A helical membrane pass occupies residues 81 to 101; the sequence is FFLYFFTAGVFGLGWLFDAFY. Over 102 to 161 the chain is Extracellular; sequence THKMVKHYNECEFTKSCVGQSPPATIPIYQSEGAYPTYQQVPQQPPQFYQPQQQQPQYQP. The interval 139 to 161 is disordered; the sequence is YQQVPQQPPQFYQPQQQQPQYQP.

It belongs to the TM2 family.

The protein localises to the membrane. The chain is TM2 domain-containing protein DDB_G0278163 from Dictyostelium discoideum (Social amoeba).